The sequence spans 47 residues: PhoP/PhoQ regulator MgrB (47 aa).

Residues 6–26 (WVILIIVLIACVILWTQTINV) traverse the membrane as a helical segment.

This sequence belongs to the MgrB family. In terms of assembly, may form homooligomers. Probably interacts with the periplasmic domain of PhoQ.

It is found in the cell inner membrane. In terms of biological role, phoP-regulated transcription is redox-sensitive, being activated when the periplasm becomes more reducing. MgrB acts between DsbA/DsbB and PhoP/PhoQ in this pathway. Represses PhoP/PhoQ signaling, possibly by binding to the periplasmic domain of PhoQ, altering its activity and that of downstream effector PhoP. This is PhoP/PhoQ regulator MgrB from Enterobacter sp. (strain 638).